The chain runs to 332 residues: 5,10-methylenetetrahydromethanopterin reductase (332 aa).

It belongs to the mer family.

Its subcellular location is the cytoplasm. The enzyme catalyses 5-methyl-5,6,7,8-tetrahydromethanopterin + oxidized coenzyme F420-(gamma-L-Glu)(n) + H(+) = 5,10-methylenetetrahydromethanopterin + reduced coenzyme F420-(gamma-L-Glu)(n). Its pathway is metabolic intermediate metabolism; lactate oxidation. In terms of biological role, catalyzes the oxidation of methyl-H(4)MPT to methylene-H(4)MPT. The polypeptide is 5,10-methylenetetrahydromethanopterin reductase (Archaeoglobus fulgidus (strain ATCC 49558 / DSM 4304 / JCM 9628 / NBRC 100126 / VC-16)).